The following is a 447-amino-acid chain: Tubulin beta chain (447 aa).

GTP contacts are provided by Gln11, Glu69, Ser138, Gly142, Thr143, Gly144, Asn204, and Asn226. Residue Glu69 coordinates Mg(2+). Residues Gln424 to Glu447 are disordered. Over residues Glu432–Glu447 the composition is skewed to acidic residues.

The protein belongs to the tubulin family. As to quaternary structure, dimer of alpha and beta chains. A typical microtubule is a hollow water-filled tube with an outer diameter of 25 nm and an inner diameter of 15 nM. Alpha-beta heterodimers associate head-to-tail to form protofilaments running lengthwise along the microtubule wall with the beta-tubulin subunit facing the microtubule plus end conferring a structural polarity. Microtubules usually have 13 protofilaments but different protofilament numbers can be found in some organisms and specialized cells. The cofactor is Mg(2+).

The protein resides in the cytoplasm. Its subcellular location is the cytoskeleton. Tubulin is the major constituent of microtubules, a cylinder consisting of laterally associated linear protofilaments composed of alpha- and beta-tubulin heterodimers. Microtubules grow by the addition of GTP-tubulin dimers to the microtubule end, where a stabilizing cap forms. Below the cap, tubulin dimers are in GDP-bound state, owing to GTPase activity of alpha-tubulin. The polypeptide is Tubulin beta chain (TUB1) (Cochliobolus heterostrophus (Southern corn leaf blight fungus)).